Reading from the N-terminus, the 214-residue chain is MSKPPPKPVKPGQVKVFRALYTFEPRTPDELYFEEGDILYIADMSDTNWWKGTCKGKTGLIPSNYVAEQAESIDNPLHEAAKRGNLSWLRECLENRVGVNGLDKAGSTALYWGCHGGHKDVVDMLLAQPNIELNQQNKLGDTALHAAAWKGYADIVELLLVKGARTDLRNNEKKLALDMATNAQCASLLKKKQAQGIVRTSSNADEYLDDEDSD.

One can recognise an SH3 domain in the interval 12-71 (GQVKVFRALYTFEPRTPDELYFEEGDILYIADMSDTNWWKGTCKGKTGLIPSNYVAEQAE). 3 ANK repeats span residues 72–101 (SIDN…GVNG), 105–135 (AGST…ELNQ), and 139–168 (LGDT…RTDL).

Its subcellular location is the cytoplasm. Induces bone resorption, acting probably through a signaling cascade which results in the secretion of factor(s) enhancing osteoclast formation and activity. In Xenopus laevis (African clawed frog), this protein is Osteoclast-stimulating factor 1 (ostf1).